Reading from the N-terminus, the 705-residue chain is uncharacterized protein (705 aa).

Catalysis depends on charge relay system residues Ser554 and His676.

Belongs to the peptidase S9A family.

This is an uncharacterized protein from Sinorhizobium fredii (strain NBRC 101917 / NGR234).